The primary structure comprises 394 residues: Chorismate synthase (394 aa).

Residues R42 and R48 each coordinate NADP(+). Residues 137–139, 258–259, G302, 317–321, and R343 contribute to the FMN site; these read RAS, QA, and KPIAT.

The protein belongs to the chorismate synthase family. Homotetramer. Requires FMNH2 as cofactor.

It carries out the reaction 5-O-(1-carboxyvinyl)-3-phosphoshikimate = chorismate + phosphate. The protein operates within metabolic intermediate biosynthesis; chorismate biosynthesis; chorismate from D-erythrose 4-phosphate and phosphoenolpyruvate: step 7/7. Its function is as follows. Catalyzes the anti-1,4-elimination of the C-3 phosphate and the C-6 proR hydrogen from 5-enolpyruvylshikimate-3-phosphate (EPSP) to yield chorismate, which is the branch point compound that serves as the starting substrate for the three terminal pathways of aromatic amino acid biosynthesis. This reaction introduces a second double bond into the aromatic ring system. This is Chorismate synthase from Streptomyces coelicolor (strain ATCC BAA-471 / A3(2) / M145).